Here is a 604-residue protein sequence, read N- to C-terminus: NADP-dependent malic enzyme, mitochondrial (604 aa).

The disordered stretch occupies residues 28 to 50 (SAPAQGCHSKSGPPRPVPLKKRG). The Proton donor role is filled by tyrosine 137. Arginine 190 contacts NADP(+). Catalysis depends on lysine 208, which acts as the Proton acceptor. A divalent metal cation is bound by residues glutamate 280, aspartate 281, and aspartate 304. Aspartate 304 lines the NADP(+) pocket. Residue serine 371 is modified to Phosphoserine. Asparagine 443 contacts NADP(+).

It belongs to the malic enzymes family. It depends on Mg(2+) as a cofactor. Mn(2+) is required as a cofactor.

It is found in the mitochondrion matrix. The catalysed reaction is (S)-malate + NADP(+) = pyruvate + CO2 + NADPH. It catalyses the reaction oxaloacetate + H(+) = pyruvate + CO2. In Mus musculus (Mouse), this protein is NADP-dependent malic enzyme, mitochondrial (Me3).